Consider the following 583-residue polypeptide: Aspartate--tRNA(Asp/Asn) ligase (583 aa).

Position 172 (glutamate 172) interacts with L-aspartate. Positions 196–199 are aspartate; sequence QMLK. Arginine 218 is a binding site for L-aspartate. ATP contacts are provided by residues 218 to 220 and glutamine 227; that span reads RDE. Histidine 446 lines the L-aspartate pocket. Glutamate 480 contacts ATP. Residue arginine 487 participates in L-aspartate binding. 532 to 535 serves as a coordination point for ATP; sequence GLDR.

The protein belongs to the class-II aminoacyl-tRNA synthetase family. Type 1 subfamily. As to quaternary structure, homodimer.

It localises to the cytoplasm. The enzyme catalyses tRNA(Asx) + L-aspartate + ATP = L-aspartyl-tRNA(Asx) + AMP + diphosphate. Aspartyl-tRNA synthetase with relaxed tRNA specificity since it is able to aspartylate not only its cognate tRNA(Asp) but also tRNA(Asn). Reaction proceeds in two steps: L-aspartate is first activated by ATP to form Asp-AMP and then transferred to the acceptor end of tRNA(Asp/Asn). The sequence is that of Aspartate--tRNA(Asp/Asn) ligase from Streptococcus mutans serotype c (strain ATCC 700610 / UA159).